Here is a 59-residue protein sequence, read N- to C-terminus: Temporin-HN2 (59 aa).

Positions 1-22 (MFTLKKSLLLLLFLGTINLSLS) are cleaved as a signal peptide. Residues 16-44 (TINLSLSEQERDAKEERRDEMDVEVEKRN) are a coiled coil. Residues 23 to 41 (EQERDAKEERRDEMDVEVE) constitute a propeptide that is removed on maturation. A Leucine amide modification is found at Leu-57.

In terms of tissue distribution, expressed by the skin glands.

It localises to the secreted. Its function is as follows. Has antimicrobial activity against some Gram-positive bacteria and fungi but has no activity against a range of Gram-negative bacteria except P.faecalis. Active against the Gram-positive bacteria S.aureus ATCC 25923 (MIC=4.8 uM), S.carnosus KHS (MIC=19 uM), B.licheniformis X39 (MIC=19 uM) and R.rhodochrous X15 (MIC=2.4 uM) but is inactive against E.faecium 091299 and E.faecalis 981. Has a less potent antimicrobial activity against the Gram-negative bacterium P.faecalis X29 (MIC=37.5 uM) and is inactive against E.coli, P.aeruginosa and S.typhi. Has antifungal activity against C.albicans ATCC 2002 (MIC=9.5 uM) and is also active against the slime mold 090223 (MIC=9.5 uM). Has extremely low hemolytic activity against human erythrocytes (LC(50)=300 uM). In Odorrana hainanensis (Odor frog), this protein is Temporin-HN2.